Consider the following 347-residue polypeptide: Transcription factor EC (347 aa).

The tract at residues 1-119 (MTLDHQIINP…GLTSASCPSS (119 aa)) is necessary for transcriptional transactivation. Residues 139-192 (QKKDNHNLIERRRRYNINYRIKELGTLIPKSNDPDMRWNKGTILKASVEYIKWL) form the bHLH domain. Residues 271–347 (PSPEFCDQAI…SFSSDDGDEL (77 aa)) are necessary for transcriptional transactivation. The tract at residues 319–347 (DPLLSATSPAVSKESSRRSSFSSDDGDEL) is disordered. Residues 326–341 (SPAVSKESSRRSSFSS) are compositionally biased toward low complexity.

It belongs to the MiT/TFE family. In terms of assembly, homodimer. Forms heterodimers with MITF and TFE3. Interacts with MITF.

The protein resides in the nucleus. Functionally, transcriptional regulator that acts as a repressor or an activator. Acts as a transcriptional repressor on minimal promoter containing element F (that includes an E-box sequence). Binds to element F in an E-box sequence-specific manner. Acts as a transcriptional transactivator on the proximal promoter region of the tartrate-resistant acid phosphatase (TRAP) E-box containing promoter. Collaborates with MITF in target gene activation. Acts as a transcriptional repressor on minimal promoter containing mu E3 enhancer sequence. Binds to mu E3 DNA sequence of the immunoglobulin heavy-chain gene enhancer. Binds DNA in a homo- or heterodimeric form. The protein is Transcription factor EC (TFEC) of Pan troglodytes (Chimpanzee).